Here is a 184-residue protein sequence, read N- to C-terminus: GTP cyclohydrolase 1 (184 aa).

Residues Cys75, His78, and Cys146 each contribute to the Zn(2+) site.

This sequence belongs to the GTP cyclohydrolase I family. In terms of assembly, homomer.

The enzyme catalyses GTP + H2O = 7,8-dihydroneopterin 3'-triphosphate + formate + H(+). It functions in the pathway cofactor biosynthesis; 7,8-dihydroneopterin triphosphate biosynthesis; 7,8-dihydroneopterin triphosphate from GTP: step 1/1. This chain is GTP cyclohydrolase 1, found in Finegoldia magna (strain ATCC 29328 / DSM 20472 / WAL 2508) (Peptostreptococcus magnus).